The chain runs to 314 residues: Probable cell division protein WhiA (314 aa).

Positions 282-314 (SLKELGELCRPPVSKSGAAHRMRQLMALAESLE) form a DNA-binding region, H-T-H motif.

The protein belongs to the WhiA family.

Involved in cell division and chromosome segregation. This Symbiobacterium thermophilum (strain DSM 24528 / JCM 14929 / IAM 14863 / T) protein is Probable cell division protein WhiA.